Here is a 176-residue protein sequence, read N- to C-terminus: Ribosome rescue factor SmrB (176 aa).

Residues 93–168 (LDLHGYRQSE…GDAALLVLID (76 aa)) form the Smr domain.

This sequence belongs to the SmrB family. Associates with collided ribosomes, but not with correctly translating polysomes.

Functionally, acts as a ribosome collision sensor. Detects stalled/collided disomes (pairs of ribosomes where the leading ribosome is stalled and a second ribosome has collided with it) and endonucleolytically cleaves mRNA at the 5' boundary of the stalled ribosome. Stalled/collided disomes form a new interface (primarily via the 30S subunits) that binds SmrB. Cleaved mRNA becomes available for tmRNA ligation, leading to ribosomal subunit dissociation and rescue of stalled ribosomes. The polypeptide is Ribosome rescue factor SmrB (Shewanella baltica (strain OS195)).